The sequence spans 388 residues: ATP phosphoribosyltransferase regulatory subunit (388 aa).

This sequence belongs to the class-II aminoacyl-tRNA synthetase family. HisZ subfamily. As to quaternary structure, heteromultimer composed of HisG and HisZ subunits.

The protein localises to the cytoplasm. It participates in amino-acid biosynthesis; L-histidine biosynthesis; L-histidine from 5-phospho-alpha-D-ribose 1-diphosphate: step 1/9. Its function is as follows. Required for the first step of histidine biosynthesis. May allow the feedback regulation of ATP phosphoribosyltransferase activity by histidine. The polypeptide is ATP phosphoribosyltransferase regulatory subunit (Acinetobacter baumannii (strain SDF)).